Consider the following 799-residue polypeptide: High affinity nerve growth factor receptor (799 aa).

The signal sequence occupies residues 1 to 33 (MLRGQRLGQLGWHRPAAGLGSLMTSLMLACASA). Residues 34-420 (ASCREVCCPV…VEKKDETPFG (387 aa)) are Extracellular-facing. Intrachain disulfides connect cysteine 36-cysteine 41 and cysteine 40-cysteine 50. Asparagine 67 is a glycosylation site (N-linked (GlcNAc...) asparagine). 2 LRR repeats span residues 90–113 (LGELRSLTIVKSGLRFVAPDAFRF) and 116–137 (RLSHLNLSSNALESLSWKTVQG). Residues asparagine 121, asparagine 190, asparagine 204, asparagine 255, asparagine 264, asparagine 320, asparagine 325, asparagine 341, asparagine 361, and asparagine 404 are each glycosylated (N-linked (GlcNAc...) asparagine). Residues 148–219 (NPLHCSCALF…GDDVFLQCQV (72 aa)) form the LRRCT domain. Cysteine 154 and cysteine 193 are joined by a disulfide. 2 consecutive Ig-like C2-type domains span residues 196 to 285 (PTVK…VSVS) and 205 to 368 (DSVE…LAAN). Disulfide bonds link cysteine 217–cysteine 267 and cysteine 302–cysteine 348. Residues 421 to 441 (VSVAVGLAVSAALFLSALLLV) traverse the membrane as a helical segment. At 442–799 (LNKCGQRSKF…APPSYLDVLG (358 aa)) the chain is on the cytoplasmic side. The interval 472-493 (MTLGGSSLSPTEGKGSGLQGHI) is interaction with SQSTM1. Tyrosine 499 is modified (phosphotyrosine; by autocatalysis). Residues 513 to 784 (IILKWELGEG…LSMKDVHARL (272 aa)) form the Protein kinase domain. Residues 519-527 (LGEGAFGKV) and lysine 547 contribute to the ATP site. Aspartate 653 serves as the catalytic Proton acceptor. 4 positions are modified to phosphotyrosine; by autocatalysis: tyrosine 679, tyrosine 683, tyrosine 684, and tyrosine 794.

Belongs to the protein kinase superfamily. Tyr protein kinase family. Insulin receptor subfamily. As to quaternary structure, exists in a dynamic equilibrium between monomeric (low affinity) and dimeric (high affinity) structures. Homodimerization is induced by binding of a NGF dimer. Found in a complex, at least composed of KIDINS220, MAGI2, NTRK1 and RAPGEF2; the complex is mainly formed at late endosomes in a nerve growth factor (NGF)-dependent manner. Interacts with RAPGEF2; the interaction is strengthened after NGF stimulation. Interacts with SQSTM1; bridges NTRK1 to NGFR. Forms a ternary complex with NGFR and KIDINS220; this complex is affected by the expression levels of KIDINS220 and an increase in KIDINS220 expression leads to a decreased association of NGFR and NTRK1. Interacts (phosphorylated upon activation by NGF) with SHC1; mediates SHC1 phosphorylation and activation. Interacts (phosphorylated upon activation by NGF) with PLCG1; mediates PLCG1 phosphorylation and activation. Interacts (phosphorylated) with SH2B1 and SH2B2. Interacts with GRB2. Interacts with PIK3R1. Interacts with FRS2. Interacts with SORT1; may regulate NTRK1 anterograde axonal transport. Interacts with SH2D1A; regulates NTRK1. Interacts with NRADD. Interacts with RAB7A. Interacts with PTPRS. Interacts with USP36; USP36 does not deubiquitinate NTRK1. Interacts with GGA3. Interacts with TSPAN1; this interaction promotes NTRK1 stability. In terms of processing, ligand-mediated autophosphorylation. Interaction with SQSTM1 is phosphotyrosine-dependent. Autophosphorylation at Tyr-499 mediates interaction and phosphorylation of SHC1. Post-translationally, N-glycosylated. Ubiquitinated. Undergoes polyubiquitination upon activation; regulated by NGFR. Ubiquitination by NEDD4L leads to degradation. Ubiquitination regulates the internalization of the receptor.

Its subcellular location is the cell membrane. The protein localises to the early endosome membrane. It is found in the late endosome membrane. The protein resides in the recycling endosome membrane. It carries out the reaction L-tyrosyl-[protein] + ATP = O-phospho-L-tyrosyl-[protein] + ADP + H(+). The pro-survival signaling effect of NTRK1 in neurons requires its endocytosis into signaling early endosomes and its retrograde axonal transport. This is regulated by different proteins including CFL1, RAC1 and SORT1. NTF3 is unable to induce this signaling probably due to the lability of the NTF3-NTRK1 complex in endosomes. SH2D1A inhibits the autophosphorylation of the receptor, and alters the recruitment and activation of downstream effectors and signaling cascades. Regulated by NGFR. In terms of biological role, receptor tyrosine kinase involved in the development and the maturation of the central and peripheral nervous systems through regulation of proliferation, differentiation and survival of sympathetic and nervous neurons. High affinity receptor for NGF which is its primary ligand, it can also bind and be activated by NTF3/neurotrophin-3. However, NTF3 only supports axonal extension through NTRK1 but has no effect on neuron survival. Upon dimeric NGF ligand-binding, undergoes homodimerization, autophosphorylation and activation. Recruits, phosphorylates and/or activates several downstream effectors including SHC1, FRS2, SH2B1, SH2B2 and PLCG1 that regulate distinct overlapping signaling cascades driving cell survival and differentiation. Through SHC1 and FRS2 activates a GRB2-Ras-MAPK cascade that regulates cell differentiation and survival. Through PLCG1 controls NF-Kappa-B activation and the transcription of genes involved in cell survival. Through SHC1 and SH2B1 controls a Ras-PI3 kinase-AKT1 signaling cascade that is also regulating survival. In absence of ligand and activation, may promote cell death, making the survival of neurons dependent on trophic factors. The protein is High affinity nerve growth factor receptor (Ntrk1) of Mus musculus (Mouse).